The sequence spans 438 residues: tRNA wybutosine-synthesizing protein 2 homolog (438 aa).

S-adenosyl-L-methionine is bound by residues S209, K216, E256, and 284–285 (DN).

This sequence belongs to the class I-like SAM-binding methyltransferase superfamily. TRM5/TYW2 family.

The enzyme catalyses 4-demethylwyosine(37) in tRNA(Phe) + S-adenosyl-L-methionine = 4-demethyl-7-[(3S)-3-amino-3-carboxypropyl]wyosine(37) in tRNA(Phe) + S-methyl-5'-thioadenosine + H(+). The protein operates within tRNA modification; wybutosine-tRNA(Phe) biosynthesis. S-adenosyl-L-methionine-dependent transferase that acts as a component of the wybutosine biosynthesis pathway. Wybutosine is a hyper modified guanosine with a tricyclic base found at the 3'-position adjacent to the anticodon of eukaryotic phenylalanine tRNA. Catalyzes the transfer of the alpha-amino-alpha-carboxypropyl (acp) group from S-adenosyl-L-methionine to the C-7 position of 4-demethylwyosine (imG-14) to produce wybutosine-86. This Bos taurus (Bovine) protein is tRNA wybutosine-synthesizing protein 2 homolog (TRMT12).